The following is a 371-amino-acid chain: MVCKHFGSCGSCALYNQNYTQQLQLKEQRVSELLSPFYTGELELFDSPDSRYRARAEFRIWHESERCDYAMGNIEKKGAVTIEECPKVIEPIEKRMWKLLEKINASQEVLKQRLFAVEFLATTTDECLVTMLYHRKLDEAWSEEAKMLERELNCRVMGRSRKQKVILSDEFVTETLEIDGKEFTYVQYESGFTQPNPAVNVKMIEWAIWQAKKVGYGDFLESYCGLGNFTLPLSHYFDNVLATEISKRSIHAALQNCELNAVENITFARLASEEMTEALNGVREFSRLKGIDLKSYDFSTVLVDPPRAGLDEGTIELISNIDNIIYISCNPETLARDLETLIKTHTVMEAALFDQFPHTEHVESGVFLQKK.

Residues Q194, Y223, N228, E244, and D304 each coordinate S-adenosyl-L-methionine. Residue C329 is the Nucleophile of the active site. The active-site Proton acceptor is the E363.

The protein belongs to the class I-like SAM-binding methyltransferase superfamily. RNA M5U methyltransferase family. TrmA subfamily.

It carries out the reaction uridine(54) in tRNA + S-adenosyl-L-methionine = 5-methyluridine(54) in tRNA + S-adenosyl-L-homocysteine + H(+). The enzyme catalyses uridine(341) in tmRNA + S-adenosyl-L-methionine = 5-methyluridine(341) in tmRNA + S-adenosyl-L-homocysteine + H(+). In terms of biological role, dual-specificity methyltransferase that catalyzes the formation of 5-methyluridine at position 54 (m5U54) in all tRNAs, and that of position 341 (m5U341) in tmRNA (transfer-mRNA). This chain is tRNA/tmRNA (uracil-C(5))-methyltransferase, found in Sulfurovum sp. (strain NBC37-1).